Consider the following 1224-residue polypeptide: Cytosolic carboxypeptidase 1 (1224 aa).

The tract at residues 361 to 398 (PPDVDDVVDESDDNDDAETESEIETEDDKDQNFKNDDI) is disordered. The span at 363–389 (DVDDVVDESDDNDDAETESEIETEDDK) shows a compositional bias: acidic residues. The 291-residue stretch at 846-1136 (YPYTYSTLKM…KFCVGLLRLK (291 aa)) folds into the Peptidase M14 domain. Zn(2+) contacts are provided by histidine 918, glutamate 921, and histidine 1015. The active-site Proton donor/acceptor is the glutamate 1100. Residues 1186–1197 (SAESNDDQDAEL) show a composition bias toward acidic residues. The segment at 1186 to 1224 (SAESNDDQDAELADNVGDYEANNQEDGLSDSDSTRILLS) is disordered. Over residues 1206-1224 (ANNQEDGLSDSDSTRILLS) the composition is skewed to polar residues.

This sequence belongs to the peptidase M14 family. Requires Zn(2+) as cofactor.

The protein resides in the cytoplasm. It is found in the cytosol. It localises to the nucleus. Its subcellular location is the mitochondrion. It catalyses the reaction (L-glutamyl)(n+1)-gamma-L-glutamyl-L-glutamyl-[protein] + H2O = (L-glutamyl)(n)-gamma-L-glutamyl-L-glutamyl-[protein] + L-glutamate. It carries out the reaction C-terminal L-alpha-aminoacyl-L-glutamyl-L-glutamyl-[tubulin] + H2O = C-terminal L-alpha-aminoacyl-L-glutamyl-[tubulin] + L-glutamate. Functionally, metallocarboxypeptidase that mediates protein deglutamylation of tubulin and non-tubulin target proteins. Catalyzes the removal of polyglutamate side chains present on the gamma-carboxyl group of glutamate residues within the C-terminal tail of alpha- and beta-tubulin. Specifically cleaves tubulin long-side-chains, while it is not able to remove the branching point glutamate. Also catalyzes the removal of polyglutamate residues from the carboxy-terminus of alpha-tubulin as well as non-tubulin proteins. This Gallus gallus (Chicken) protein is Cytosolic carboxypeptidase 1 (AGTPBP1).